The following is a 214-amino-acid chain: Large ribosomal subunit protein uL16 (214 aa).

The residue at position 32 (arginine 32) is a Citrulline. Lysine 175 is covalently cross-linked (Glycyl lysine isopeptide (Lys-Gly) (interchain with G-Cter in SUMO2)). A Glycyl lysine isopeptide (Lys-Gly) (interchain with G-Cter in ubiquitin) cross-link involves residue lysine 188.

This sequence belongs to the universal ribosomal protein uL16 family. Component of the large ribosomal subunit. Mature ribosomes consist of a small (40S) and a large (60S) subunit. The 40S subunit contains about 33 different proteins and 1 molecule of RNA (18S). The 60S subunit contains about 49 different proteins and 3 molecules of RNA (28S, 5.8S and 5S). In terms of processing, citrullinated by PADI4. Ufmylated by UFL1.

The protein resides in the cytoplasm. Its function is as follows. Component of the large ribosomal subunit. Plays a role in the formation of actively translating ribosomes. May play a role in the embryonic brain development. The protein is Large ribosomal subunit protein uL16 of Pongo abelii (Sumatran orangutan).